We begin with the raw amino-acid sequence, 566 residues long: Phosphatidylinositol 4-kinase gamma 4 (566 aa).

Ubiquitin-like domains follow at residues 34-111 (TIMI…SDLQ) and 112-190 (VLDV…AKVR). A compositionally biased stretch (polar residues) spans 250-263 (DGLKSGNSPVRSSE). A disordered region spans residues 250-272 (DGLKSGNSPVRSSEGTGGAYFMQ). Positions 255–547 (GNSPVRSSEG…AVLPGTSEAA (293 aa)) constitute a PI3K/PI4K catalytic domain. Positions 261 to 267 (SSEGTGG) are G-loop. ATP is bound by residues 262–268 (SEGTGGA), lysine 284, and 374–377 (QMFT). Positions 407 to 415 (ANADRHGGN) are catalytic loop. The interval 430-456 (PIDHGYCLPESFEDCTFEWLYWPQARK) is activation loop. Residue aspartate 432 coordinates ATP.

It belongs to the PI3/PI4-kinase family. Type II PI4K subfamily. Interacts with RPN10, UFD1 and CDC48 in vitro. In terms of processing, autophosphorylated.

It is found in the membrane. The catalysed reaction is a 1,2-diacyl-sn-glycero-3-phospho-(1D-myo-inositol) + ATP = a 1,2-diacyl-sn-glycero-3-phospho-(1D-myo-inositol 4-phosphate) + ADP + H(+). In terms of biological role, the phosphorylation of phosphatidylinositol (PI) to PI4P is the first committed step in the generation of phosphatidylinositol 4,5-bisphosphate (PIP2), a precursor of the second messenger inositol 1,4,5-trisphosphate (InsP3). Undergoes autophosphorylation and phosphorylates serine/threonine residues of protein substrates. Phosphorylates RPN10 and UFD1 in vitro. In Arabidopsis thaliana (Mouse-ear cress), this protein is Phosphatidylinositol 4-kinase gamma 4.